Here is a 338-residue protein sequence, read N- to C-terminus: 4-hydroxy-3-methylbut-2-enyl diphosphate reductase (338 aa).

Residue Cys21 participates in [4Fe-4S] cluster binding. Residues His50 and His83 each coordinate (2E)-4-hydroxy-3-methylbut-2-enyl diphosphate. 2 residues coordinate dimethylallyl diphosphate: His50 and His83. Isopentenyl diphosphate is bound by residues His50 and His83. Cys105 is a [4Fe-4S] cluster binding site. His133 contacts (2E)-4-hydroxy-3-methylbut-2-enyl diphosphate. His133 lines the dimethylallyl diphosphate pocket. Residue His133 participates in isopentenyl diphosphate binding. Residue Glu135 is the Proton donor of the active site. Thr173 serves as a coordination point for (2E)-4-hydroxy-3-methylbut-2-enyl diphosphate. Cys203 provides a ligand contact to [4Fe-4S] cluster. Residues Ser231, Ser232, Asn233, and Ser276 each contribute to the (2E)-4-hydroxy-3-methylbut-2-enyl diphosphate site. Residues Ser231, Ser232, Asn233, and Ser276 each contribute to the dimethylallyl diphosphate site. Isopentenyl diphosphate is bound by residues Ser231, Ser232, Asn233, and Ser276.

The protein belongs to the IspH family. It depends on [4Fe-4S] cluster as a cofactor.

It catalyses the reaction isopentenyl diphosphate + 2 oxidized [2Fe-2S]-[ferredoxin] + H2O = (2E)-4-hydroxy-3-methylbut-2-enyl diphosphate + 2 reduced [2Fe-2S]-[ferredoxin] + 2 H(+). It carries out the reaction dimethylallyl diphosphate + 2 oxidized [2Fe-2S]-[ferredoxin] + H2O = (2E)-4-hydroxy-3-methylbut-2-enyl diphosphate + 2 reduced [2Fe-2S]-[ferredoxin] + 2 H(+). It participates in isoprenoid biosynthesis; dimethylallyl diphosphate biosynthesis; dimethylallyl diphosphate from (2E)-4-hydroxy-3-methylbutenyl diphosphate: step 1/1. It functions in the pathway isoprenoid biosynthesis; isopentenyl diphosphate biosynthesis via DXP pathway; isopentenyl diphosphate from 1-deoxy-D-xylulose 5-phosphate: step 6/6. In terms of biological role, catalyzes the conversion of 1-hydroxy-2-methyl-2-(E)-butenyl 4-diphosphate (HMBPP) into a mixture of isopentenyl diphosphate (IPP) and dimethylallyl diphosphate (DMAPP). Acts in the terminal step of the DOXP/MEP pathway for isoprenoid precursor biosynthesis. This chain is 4-hydroxy-3-methylbut-2-enyl diphosphate reductase, found in Streptomyces coelicolor (strain ATCC BAA-471 / A3(2) / M145).